A 221-amino-acid polypeptide reads, in one-letter code: 2-C-methyl-D-erythritol 4-phosphate cytidylyltransferase (221 aa).

Belongs to the IspD/TarI cytidylyltransferase family. IspD subfamily.

It catalyses the reaction 2-C-methyl-D-erythritol 4-phosphate + CTP + H(+) = 4-CDP-2-C-methyl-D-erythritol + diphosphate. The protein operates within isoprenoid biosynthesis; isopentenyl diphosphate biosynthesis via DXP pathway; isopentenyl diphosphate from 1-deoxy-D-xylulose 5-phosphate: step 2/6. Catalyzes the formation of 4-diphosphocytidyl-2-C-methyl-D-erythritol from CTP and 2-C-methyl-D-erythritol 4-phosphate (MEP). In Roseobacter denitrificans (strain ATCC 33942 / OCh 114) (Erythrobacter sp. (strain OCh 114)), this protein is 2-C-methyl-D-erythritol 4-phosphate cytidylyltransferase.